The chain runs to 352 residues: Ion-translocating oxidoreductase complex subunit D (352 aa).

A run of 5 helical transmembrane segments spans residues 20-40, 42-62, 68-88, 89-109, and 123-143; these read IMLL…WFFG, GTLV…ALVL, PIAA…LAVS, IPPL…VIIA, and PAMI…TNWL. Threonine 187 bears the FMN phosphoryl threonine mark. Transmembrane regions (helical) follow at residues 217 to 237, 244 to 264, 267 to 287, 301 to 321, and 322 to 342; these read GAGW…LLAI, IPVS…LFAP, LASP…FFIL, LIFG…GGYP, and DGVA…DYYT.

This sequence belongs to the NqrB/RnfD family. In terms of assembly, the complex is composed of six subunits: RsxA, RsxB, RsxC, RsxD, RsxE and RsxG. It depends on FMN as a cofactor.

It localises to the cell inner membrane. In terms of biological role, part of a membrane-bound complex that couples electron transfer with translocation of ions across the membrane. Required to maintain the reduced state of SoxR. The protein is Ion-translocating oxidoreductase complex subunit D of Escherichia fergusonii (strain ATCC 35469 / DSM 13698 / CCUG 18766 / IAM 14443 / JCM 21226 / LMG 7866 / NBRC 102419 / NCTC 12128 / CDC 0568-73).